The primary structure comprises 459 residues: Inositol-trisphosphate 3-kinase A (459 aa).

Positions 1 to 26 (MTLPGHPTGMARPRGAGPCSPGLERA) are disordered. Arginine 35, arginine 55, and arginine 62 each carry omega-N-methylarginine. A disordered region spans residues 49-164 (AAAGEPRARG…TSEDVGQKSH (116 aa)). Residues 116-132 (RRLSTSSLSSTGSSSLL) show a composition bias toward low complexity. 2 positions are modified to phosphoserine: serine 135 and serine 195. Residues serine 195, lysine 207, 247-249 (QDL), and aspartate 260 each bind ATP. Lysine 262 and arginine 283 together coordinate substrate. Positions 285–293 (DMYKKMLAV) are calmodulin-binding. 310–317 (KPRYMQWR) lines the substrate pocket. Residues lysine 334 and aspartate 414 each contribute to the ATP site. Substrate is bound at residue lysine 417.

This sequence belongs to the inositol phosphokinase (IPK) family.

The protein resides in the cytoplasm. The protein localises to the cytoskeleton. It catalyses the reaction 1D-myo-inositol 1,4,5-trisphosphate + ATP = 1D-myo-inositol 1,3,4,5-tetrakisphosphate + ADP + H(+). With respect to regulation, activated by calcium/calmodulin. Functionally, catalyzes the phosphorylation of 1D-myo-inositol 1,4,5-trisphosphate (InsP3) into 1D-myo-inositol 1,3,4,5-tetrakisphosphate and participates to the regulation of calcium homeostasis. In Rattus norvegicus (Rat), this protein is Inositol-trisphosphate 3-kinase A.